Here is a 237-residue protein sequence, read N- to C-terminus: Uracil-DNA glycosylase (237 aa).

Aspartate 77 (proton acceptor) is an active-site residue.

This sequence belongs to the uracil-DNA glycosylase (UDG) superfamily. UNG family.

It localises to the cytoplasm. The catalysed reaction is Hydrolyzes single-stranded DNA or mismatched double-stranded DNA and polynucleotides, releasing free uracil.. Its function is as follows. Excises uracil residues from the DNA which can arise as a result of misincorporation of dUMP residues by DNA polymerase or due to deamination of cytosine. The polypeptide is Uracil-DNA glycosylase (Acinetobacter baumannii (strain ACICU)).